Consider the following 294-residue polypeptide: Cytidine deaminase (294 aa).

2 consecutive CMP/dCMP-type deaminase domains span residues 49–169 and 188–294; these read TPQQ…FGPA and ETQD…YIAL. 90–92 lines the substrate pocket; the sequence is NLE. Position 103 (histidine 103) interacts with Zn(2+). The Proton donor role is filled by glutamate 105. Residues cysteine 130 and cysteine 133 each contribute to the Zn(2+) site.

This sequence belongs to the cytidine and deoxycytidylate deaminase family. As to quaternary structure, homodimer. Zn(2+) is required as a cofactor.

It catalyses the reaction cytidine + H2O + H(+) = uridine + NH4(+). The enzyme catalyses 2'-deoxycytidine + H2O + H(+) = 2'-deoxyuridine + NH4(+). Its function is as follows. This enzyme scavenges exogenous and endogenous cytidine and 2'-deoxycytidine for UMP synthesis. The chain is Cytidine deaminase from Pasteurella multocida (strain Pm70).